The sequence spans 141 residues: MAVQRTFSIIKPDAVAKNVIGKIVSRFEEAGLRVVASKMKQLSKAEAEGFYAEHSERGFFGELVAFMTSGPVVVQVLEGENAIVRNRELMGATNPKEAAAGTIRADFAESIDANAVHGSDSEAAAAREIAYFFAATEVTAR.

ATP contacts are provided by Lys-11, Phe-59, Arg-87, Thr-93, Arg-104, and Asn-114. His-117 acts as the Pros-phosphohistidine intermediate in catalysis.

The protein belongs to the NDK family. Homotetramer. Mg(2+) serves as cofactor.

The protein resides in the cytoplasm. It carries out the reaction a 2'-deoxyribonucleoside 5'-diphosphate + ATP = a 2'-deoxyribonucleoside 5'-triphosphate + ADP. The enzyme catalyses a ribonucleoside 5'-diphosphate + ATP = a ribonucleoside 5'-triphosphate + ADP. Major role in the synthesis of nucleoside triphosphates other than ATP. The ATP gamma phosphate is transferred to the NDP beta phosphate via a ping-pong mechanism, using a phosphorylated active-site intermediate. The chain is Nucleoside diphosphate kinase from Pseudomonas fluorescens (strain ATCC BAA-477 / NRRL B-23932 / Pf-5).